Here is a 421-residue protein sequence, read N- to C-terminus: MPGNLEPLDLGIQIPYHFRCPISLDLMSDPVTISTGQTYDRTSIDSWIAMGNTTCPVTRVALSDFTLIPNHTLRRLIQEWCVANRSNGVERIPTPKQPADPISVRSLLSQASAITGTHVSVRSRAAAIRRLRGLARDSEKNRVLIAGHNAREILVRILFADIETTSLSSELVSESLALLVLLHMTETECEAVASDPSRVGFMTRLLFDSSIEIRVNAAALIEMVLTGAKSMDLKLIISGSDSIFEGVLDLLKNPISSRRALKIGIKAIFALCLVKQTRHLAISAGAPGILIDRLAADFDRCDTERGLATVELLCRLPEGCAAFGEHALTVPLMVKTILRVSDRATEYAAGALLALCTAEERCRDEAAAAGLVTQLLLLVQSDCTERAKRKAQMLLKLLRDSWPDDSTVHSDDFNRSEVAPF.

Residues 13-87 form the U-box domain; sequence QIPYHFRCPI…QEWCVANRSN (75 aa).

It catalyses the reaction S-ubiquitinyl-[E2 ubiquitin-conjugating enzyme]-L-cysteine + [acceptor protein]-L-lysine = [E2 ubiquitin-conjugating enzyme]-L-cysteine + N(6)-ubiquitinyl-[acceptor protein]-L-lysine.. Its pathway is protein modification; protein ubiquitination. Its function is as follows. Functions as an E3 ubiquitin ligase. This is U-box domain-containing protein 26 (PUB26) from Arabidopsis thaliana (Mouse-ear cress).